The chain runs to 438 residues: tRNA wybutosine-synthesizing protein 2 homolog (438 aa).

S-adenosyl-L-methionine-binding positions include Ser209, Lys216, Glu256, and 284–285 (DN).

This sequence belongs to the class I-like SAM-binding methyltransferase superfamily. TRM5/TYW2 family.

It carries out the reaction 4-demethylwyosine(37) in tRNA(Phe) + S-adenosyl-L-methionine = 4-demethyl-7-[(3S)-3-amino-3-carboxypropyl]wyosine(37) in tRNA(Phe) + S-methyl-5'-thioadenosine + H(+). It functions in the pathway tRNA modification; wybutosine-tRNA(Phe) biosynthesis. In terms of biological role, S-adenosyl-L-methionine-dependent transferase that acts as a component of the wybutosine biosynthesis pathway. Wybutosine is a hyper modified guanosine with a tricyclic base found at the 3'-position adjacent to the anticodon of eukaryotic phenylalanine tRNA. Catalyzes the transfer of the alpha-amino-alpha-carboxypropyl (acp) group from S-adenosyl-L-methionine to the C-7 position of 4-demethylwyosine (imG-14) to produce wybutosine-86. The protein is tRNA wybutosine-synthesizing protein 2 homolog (TRMT12) of Bos taurus (Bovine).